A 221-amino-acid chain; its full sequence is Protein myomaker (221 aa).

Residues M1 to T3 lie on the Extracellular side of the membrane. The chain crosses the membrane as a helical span at residues L4–I24. The Cytoplasmic segment spans residues A25–A34. A helical membrane pass occupies residues M35 to L55. The Extracellular segment spans residues S56–D64. A helical transmembrane segment spans residues I65 to L85. Over A86–K92 the chain is Cytoplasmic. Residues R93–H110 form a helical membrane-spanning segment. Residues D111–W113 lie on the Extracellular side of the membrane. The chain crosses the membrane as a helical span at residues G114–L134. Residues Q135–Q153 lie on the Cytoplasmic side of the membrane. The chain crosses the membrane as a helical span at residues I154–W174. A topological domain (extracellular) is located at residue D175. A helical membrane pass occupies residues Y176–P196. The Cytoplasmic segment spans residues K197–V221. 2 S-palmitoyl cysteine lipidation sites follow: C217 and C218.

This sequence belongs to the TMEM8 family. As to quaternary structure, interacts with MYMX. Palmitoylated at the C-terminus; palmitoylation promotes localization to the Golgi apparatus.

It localises to the cell membrane. It is found in the golgi apparatus membrane. Functionally, myoblast-specific protein that mediates myoblast fusion, an essential step for the formation of multi-nucleated muscle fibers. Actively participates in the membrane fusion reaction by mediating the mixing of cell membrane lipids (hemifusion) upstream of MYMX. Acts independently of MYMX. Involved in skeletal muscle regeneration in response to injury by mediating the fusion of satellite cells, a population of muscle stem cells, with injured myofibers. Also involved in skeletal muscle hypertrophy, probably by mediating the fusion of satellite cells with myofibers. The polypeptide is Protein myomaker (Homo sapiens (Human)).